The primary structure comprises 62 residues: Cytotoxin 7 (62 aa).

Positions 1-2 are cleaved as a signal peptide; sequence YT. Cystine bridges form between C5–C23, C16–C40, C44–C55, and C56–C61.

The protein belongs to the three-finger toxin family. Short-chain subfamily. Type IA cytotoxin sub-subfamily. As to quaternary structure, monomer in solution; Homodimer and oligomer in the presence of negatively charged lipids forming a pore with a size ranging between 20 and 30 Angstroms. As to expression, expressed by the venom gland.

It is found in the secreted. The protein resides in the target cell membrane. Functionally, shows cytolytic activity on many different cells by forming pore in lipid membranes. In vivo, increases heart rate or kills the animal by cardiac arrest. In addition, it binds to heparin with high affinity, interacts with Kv channel-interacting protein 1 (KCNIP1) in a calcium-independent manner, and binds to integrin alpha-V/beta-3 (ITGAV/ITGB3) with moderate affinity. In Naja sputatrix (Malayan spitting cobra), this protein is Cytotoxin 7.